The following is a 391-amino-acid chain: 3-ketoacyl-CoA thiolase (391 aa).

Residue Cys-95 is the Acyl-thioester intermediate of the active site. Active-site proton acceptor residues include His-347 and Cys-377.

It belongs to the thiolase-like superfamily. Thiolase family. In terms of assembly, heterotetramer of two alpha chains (FadB) and two beta chains (FadA).

It localises to the cytoplasm. It carries out the reaction an acyl-CoA + acetyl-CoA = a 3-oxoacyl-CoA + CoA. It functions in the pathway lipid metabolism; fatty acid beta-oxidation. Catalyzes the final step of fatty acid oxidation in which acetyl-CoA is released and the CoA ester of a fatty acid two carbons shorter is formed. This Pseudomonas putida (Arthrobacter siderocapsulatus) protein is 3-ketoacyl-CoA thiolase.